We begin with the raw amino-acid sequence, 282 residues long: Putative 1-acyl-sn-glycerol-3-phosphate acyltransferase acl-2 (282 aa).

2 helical membrane passes run 4–24 (FWSI…NIST) and 32–52 (ISFY…TMIP). An HXXXXD motif motif is present at residues 98-103 (HQSSLD). Residues 122-142 (ILAYVPFFNLGAYFSNTIFID) form a helical membrane-spanning segment.

This sequence belongs to the 1-acyl-sn-glycerol-3-phosphate acyltransferase family.

Its subcellular location is the membrane. The enzyme catalyses a 1-acyl-sn-glycero-3-phosphate + an acyl-CoA = a 1,2-diacyl-sn-glycero-3-phosphate + CoA. It participates in phospholipid metabolism; CDP-diacylglycerol biosynthesis; CDP-diacylglycerol from sn-glycerol 3-phosphate: step 2/3. Its function is as follows. Converts lysophosphatidic acid (LPA) into phosphatidic acid by incorporating an acyl moiety at the sn-2 position of the glycerol backbone. This is Putative 1-acyl-sn-glycerol-3-phosphate acyltransferase acl-2 (acl-2) from Caenorhabditis elegans.